Reading from the N-terminus, the 169-residue chain is NAD(P)H-quinone oxidoreductase subunit J, chloroplastic (169 aa).

Belongs to the complex I 30 kDa subunit family. NDH is composed of at least 16 different subunits, 5 of which are encoded in the nucleus.

The protein localises to the plastid. It localises to the chloroplast thylakoid membrane. The enzyme catalyses a plastoquinone + NADH + (n+1) H(+)(in) = a plastoquinol + NAD(+) + n H(+)(out). The catalysed reaction is a plastoquinone + NADPH + (n+1) H(+)(in) = a plastoquinol + NADP(+) + n H(+)(out). NDH shuttles electrons from NAD(P)H:plastoquinone, via FMN and iron-sulfur (Fe-S) centers, to quinones in the photosynthetic chain and possibly in a chloroplast respiratory chain. The immediate electron acceptor for the enzyme in this species is believed to be plastoquinone. Couples the redox reaction to proton translocation, and thus conserves the redox energy in a proton gradient. The chain is NAD(P)H-quinone oxidoreductase subunit J, chloroplastic from Marchantia polymorpha (Common liverwort).